The chain runs to 295 residues: G1/S-specific cyclin-D1 (295 aa).

Residues 28–152 enclose the Cyclin N-terminal domain; sequence LRAMLKAEET…LLVNKLKWNL (125 aa). The segment at 264–295 is disordered; sequence QQSLDPKAAEEEEEEEEADLACTPTDVRDVNI. Lys-270 is covalently cross-linked (Glycyl lysine isopeptide (Lys-Gly) (interchain with G-Cter in ubiquitin)). Residues 273-282 are compositionally biased toward acidic residues; sequence EEEEEEEEAD. The residue at position 286 (Thr-286) is a Phosphothreonine.

The protein belongs to the cyclin family. Cyclin D subfamily. In terms of assembly, interacts with either CDK4 or CDK6 protein kinase to form a serine/threonine kinase holoenzyme complex. The cyclin subunit imparts substrate specificity to the complex. Component of the ternary complex CCND1/CDK4/CDKN1B required for nuclear translocation and modulation of CDK4-mediated kinase activity. Interacts directly with CDKN1B. Can form similar complexes with either CDKN1A or CDKN2A. Interacts with UHRF2; the interaction ubiquitinates CCND1 and appears to occur independently of phosphorylation. Interacts with USP2. Interacts (via cyclin N-terminal domain) with INSM1 (via N-terminal region); the interaction competes with the binding of CCND1 to CDK4 during cell cycle progression and inhibits CDK4 activity. Interacts with CDK4; the interaction is prevented with the binding of CCND1 to INSM1 during cell cycle progression. Phosphorylation at Thr-286 by MAP kinases is required for ubiquitination and degradation by the DCX(AMBRA1) complex. It also plays an essential role for recognition by the FBXO31 component of SCF (SKP1-cullin-F-box) protein ligase complex following DNA damage. Post-translationally, ubiquitinated at Lys-270 by the DCX(AMBRA1) complex during the transition from G1 to S cell phase, leading to its degradation: ubiquitination is dependent on Thr-286 phosphorylation. The DCX(AMBRA1) complex represents the major regulator of CCND1 stability during the G1/S transition. Also ubiquitinated by the SCF(FBXO4) and Cul7-RING(FBXW8) ubiquitin-protein ligase complexes. Following DNA damage it is ubiquitinated by the SCF(FBXO31) protein ligase complex. SCF(FBXO31) ubiquitination is dependent on Thr-286 phosphorylation. Ubiquitinated also by UHRF2 apparently in a phosphorylation-independent manner. Ubiquitination leads to its degradation and G1 arrest. Deubiquitinated by USP2; leading to its stabilization.

The protein localises to the nucleus. It is found in the cytoplasm. Its subcellular location is the nucleus membrane. In terms of biological role, regulatory component of the cyclin D1-CDK4 (DC) complex that phosphorylates and inhibits members of the retinoblastoma (RB) protein family including RB1 and regulates the cell-cycle during G(1)/S transition. Phosphorylation of RB1 allows dissociation of the transcription factor E2F from the RB/E2F complex and the subsequent transcription of E2F target genes which are responsible for the progression through the G(1) phase. Hypophosphorylates RB1 in early G(1) phase. Cyclin D-CDK4 complexes are major integrators of various mitogenenic and antimitogenic signals. Also a substrate for SMAD3, phosphorylating SMAD3 in a cell-cycle-dependent manner and repressing its transcriptional activity. Component of the ternary complex, cyclin D1/CDK4/CDKN1B, required for nuclear translocation and activity of the cyclin D-CDK4 complex. Exhibits transcriptional corepressor activity with INSM1 on the NEUROD1 and INS promoters in a cell cycle-independent manner. This is G1/S-specific cyclin-D1 (CCND1) from Canis lupus familiaris (Dog).